The primary structure comprises 116 residues: Small ribosomal subunit protein uS13 (116 aa).

Residues Arg-92 to Arg-116 are disordered. The segment covering Ala-106–Arg-116 has biased composition (basic residues).

The protein belongs to the universal ribosomal protein uS13 family. As to quaternary structure, part of the 30S ribosomal subunit. Forms a loose heterodimer with protein S19. Forms two bridges to the 50S subunit in the 70S ribosome.

Its function is as follows. Located at the top of the head of the 30S subunit, it contacts several helices of the 16S rRNA. In the 70S ribosome it contacts the 23S rRNA (bridge B1a) and protein L5 of the 50S subunit (bridge B1b), connecting the 2 subunits; these bridges are implicated in subunit movement. Contacts the tRNAs in the A and P-sites. In Lactobacillus acidophilus (strain ATCC 700396 / NCK56 / N2 / NCFM), this protein is Small ribosomal subunit protein uS13.